The chain runs to 138 residues: Small ribosomal subunit protein uS11c (138 aa).

The interval 1–21 (MTKAIQKIGSRRNGRIASRKN) is disordered. The span at 9-21 (GSRRNGRIASRKN) shows a compositional bias: basic residues.

The protein belongs to the universal ribosomal protein uS11 family. As to quaternary structure, part of the 30S ribosomal subunit.

It is found in the plastid. It localises to the chloroplast. This chain is Small ribosomal subunit protein uS11c, found in Ceratophyllum demersum (Rigid hornwort).